Reading from the N-terminus, the 419-residue chain is UDP-N-acetylglucosamine 1-carboxyvinyltransferase (419 aa).

Phosphoenolpyruvate is bound at residue 22-23; the sequence is KN. UDP-N-acetyl-alpha-D-glucosamine is bound at residue R91. The active-site Proton donor is the C115. C115 is modified (2-(S-cysteinyl)pyruvic acid O-phosphothioketal). UDP-N-acetyl-alpha-D-glucosamine-binding positions include 120–124, 160–163, D305, and I327; these read RPVDL and KVSV.

The protein belongs to the EPSP synthase family. MurA subfamily.

It is found in the cytoplasm. It catalyses the reaction phosphoenolpyruvate + UDP-N-acetyl-alpha-D-glucosamine = UDP-N-acetyl-3-O-(1-carboxyvinyl)-alpha-D-glucosamine + phosphate. Its pathway is cell wall biogenesis; peptidoglycan biosynthesis. Cell wall formation. Adds enolpyruvyl to UDP-N-acetylglucosamine. This is UDP-N-acetylglucosamine 1-carboxyvinyltransferase from Serratia proteamaculans (strain 568).